The chain runs to 420 residues: Glyceraldehyde-3-phosphate dehydrogenase GAPCP2, chloroplastic (420 aa).

The N-terminal 66 residues, 1-66 (MALSSLLRSA…YNAKRVQPIK (66 aa)), are a transit peptide targeting the chloroplast. NAD(+) is bound by residues 94-95 (RI), D116, and R162. D-glyceraldehyde 3-phosphate contacts are provided by residues 233–235 (SCT), T264, 293–294 (TG), and R316. The Nucleophile role is filled by C234. N398 serves as a coordination point for NAD(+).

This sequence belongs to the glyceraldehyde-3-phosphate dehydrogenase family. In terms of assembly, homotetramer. As to expression, expressed in shoot and root vasculature, leaf veins and vascular tissue of flowers and siliques.

Its subcellular location is the plastid. The protein resides in the chloroplast stroma. It catalyses the reaction D-glyceraldehyde 3-phosphate + phosphate + NAD(+) = (2R)-3-phospho-glyceroyl phosphate + NADH + H(+). Involved in plastidial glycolytic pathway and plays a specific role in glycolytic energy production in non-green plastids and chloroplasts. Essential for breakdown of starch to form sucrose for export to non-photosynthetic tissues, and to generate primary metabolites for anabolic pathways such as fatty acid and amino acid synthesis. Plays an important role in plant development by providing substrates for the phosphorylated pathway of serine biosynthesis in roots. Plays a crucial role in pollen development. Functionally redundant with GAPCP1. The chain is Glyceraldehyde-3-phosphate dehydrogenase GAPCP2, chloroplastic (GAPCP2) from Arabidopsis thaliana (Mouse-ear cress).